A 463-amino-acid polypeptide reads, in one-letter code: Cis-zeatin O-glucosyltransferase 2 (463 aa).

His21 functions as the Proton acceptor in the catalytic mechanism. 2 residues coordinate an anthocyanidin: His21 and Asn91. Residue Asp127 is the Charge relay of the active site. Ala339, Gln341, His356, Trp359, Asn360, Ser361, Glu364, Asp380, and Gln381 together coordinate UDP-alpha-D-glucose.

It belongs to the UDP-glycosyltransferase family. In terms of tissue distribution, highly expressed in root. Expressed at much lower level in kernel. Weakly or not expressed in expressed in stems and leaves.

It carries out the reaction cis-zeatin + UDP-alpha-D-glucose = O-beta-D-glucosyl-cis-zeatin + UDP + H(+). Utilizes UDP-glucose as the sugar donor and catalyzes the formation of O-beta-D-glucosyl-cis-zeatin from cis-zeatin. May regulate active versus storage forms of cytokinins and could have an impact on seed growth. In Zea mays (Maize), this protein is Cis-zeatin O-glucosyltransferase 2.